Consider the following 500-residue polypeptide: Lysine--tRNA ligase (500 aa).

Residues Glu411 and Glu418 each coordinate Mg(2+).

Belongs to the class-II aminoacyl-tRNA synthetase family. Homodimer. Mg(2+) is required as a cofactor.

The protein localises to the cytoplasm. It carries out the reaction tRNA(Lys) + L-lysine + ATP = L-lysyl-tRNA(Lys) + AMP + diphosphate. This chain is Lysine--tRNA ligase, found in Azoarcus sp. (strain BH72).